A 197-amino-acid chain; its full sequence is Suppressor of RNA silencing p3 (197 aa).

This sequence belongs to the tenuiviruses p3 protein family. As to quaternary structure, homodimer.

The protein resides in the host cytoplasm. Its function is as follows. Acts as a suppressor of RNA-mediated gene silencing, also known as post-transcriptional gene silencing (PTGS), presumably through the binding of dsRNA. The sequence is that of Suppressor of RNA silencing p3 from Rottboellia (Sorghum).